Here is a 147-residue protein sequence, read N- to C-terminus: Leech anti-platelet protein (147 aa).

Positions 1-21 (MNSFLFSLACSLLVAIPAISA) are cleaved as a signal peptide. A disordered region spans residues 21 to 71 (AQDEDAGGAGDETSEGEDTTGSDETPSTGGGGDGGNEETITAGNEDCWSKR). The span at 22 to 41 (QDEDAGGAGDETSEGEDTTG) shows a compositional bias: acidic residues. Disulfide bonds link C67-C145, C92-C117, and C96-C105.

Post-translationally, the N-terminus is blocked. As to expression, expressed by salivary glands.

The protein resides in the secreted. Functionally, inhibits collagen-stimulated platelet aggregation (IC(50)=60 nM), dense granule release and serotonin release. Does not inhibit platelet aggregation induced by ADP, arachidonic acid, and thrombin. The polypeptide is Leech anti-platelet protein (Haementeria officinalis (Mexican leech)).